The following is a 906-amino-acid chain: Protein translocase subunit SecA (906 aa).

Residues glutamine 86, 104–108 (GEGKT), and aspartate 499 each bind ATP. Residues 834 to 847 (KLQKNMRESREDPA) show a composition bias toward basic and acidic residues. The segment at 834 to 887 (KLQKNMRESREDPAFSKYNAGSSLETDLKPVVSRVDPKDRNPDDPTSWGRVSRN) is disordered. Zn(2+)-binding residues include cysteine 890, cysteine 892, cysteine 901, and histidine 902.

This sequence belongs to the SecA family. Monomer and homodimer. Part of the essential Sec protein translocation apparatus which comprises SecA, SecYEG and auxiliary proteins SecDF-YajC and YidC. Zn(2+) is required as a cofactor.

The protein resides in the cell inner membrane. Its subcellular location is the cytoplasm. It catalyses the reaction ATP + H2O + cellular proteinSide 1 = ADP + phosphate + cellular proteinSide 2.. Functionally, part of the Sec protein translocase complex. Interacts with the SecYEG preprotein conducting channel. Has a central role in coupling the hydrolysis of ATP to the transfer of proteins into and across the cell membrane, serving both as a receptor for the preprotein-SecB complex and as an ATP-driven molecular motor driving the stepwise translocation of polypeptide chains across the membrane. The polypeptide is Protein translocase subunit SecA (Rickettsia felis (strain ATCC VR-1525 / URRWXCal2) (Rickettsia azadi)).